The following is a 400-amino-acid chain: Glutamyl-tRNA reductase (400 aa).

Residues 45-48, serine 103, 108-110, and glutamine 114 contribute to the substrate site; these read TCNR and EDQ. Residue cysteine 46 is the Nucleophile of the active site. 179-184 provides a ligand contact to NADP(+); it reads GYGEIG.

It belongs to the glutamyl-tRNA reductase family. Homodimer.

It catalyses the reaction (S)-4-amino-5-oxopentanoate + tRNA(Glu) + NADP(+) = L-glutamyl-tRNA(Glu) + NADPH + H(+). It functions in the pathway porphyrin-containing compound metabolism; protoporphyrin-IX biosynthesis; 5-aminolevulinate from L-glutamyl-tRNA(Glu): step 1/2. Its function is as follows. Catalyzes the NADPH-dependent reduction of glutamyl-tRNA(Glu) to glutamate 1-semialdehyde (GSA). In Clostridium perfringens (strain ATCC 13124 / DSM 756 / JCM 1290 / NCIMB 6125 / NCTC 8237 / Type A), this protein is Glutamyl-tRNA reductase.